Here is a 659-residue protein sequence, read N- to C-terminus: Cysteine-rich receptor-like protein kinase 7 (659 aa).

An N-terminal signal peptide occupies residues 1 to 23; it reads MSSLFPFIFLFLFSFLTSFRASA. Residues 24–273 lie on the Extracellular side of the membrane; that stretch reads QDPRFLAYYC…SLSDKSGNSN (250 aa). 2 consecutive Gnk2-homologous domains span residues 27 to 131 and 142 to 244; these read RFLA…HKNI and FILR…LYDF. N-linked (GlcNAc...) asparagine glycosylation is found at Asn-35, Asn-42, Asn-60, Asn-69, and Asn-103. Asn-246 is a glycosylation site (N-linked (GlcNAc...) asparagine). Residues 274-294 traverse the membrane as a helical segment; that stretch reads VVVVAVVVPIIVAVLIFIAGY. Residues 295 to 659 lie on the Cytoplasmic side of the membrane; it reads CFFAKRAKKT…DKSMSDLDPR (365 aa). Residues 336–622 enclose the Protein kinase domain; it reads FSENNKIGRG…ALPAPQQPGF (287 aa). Residues 342–350 and Lys-364 contribute to the ATP site; that span reads IGRGGFGDV. A Phosphotyrosine modification is found at Tyr-409. Asp-461 acts as the Proton acceptor in catalysis. Residue Ser-465 is modified to Phosphoserine. Thr-501 bears the Phosphothreonine mark. Tyr-509 is subject to Phosphotyrosine. Residues 626–659 form a disordered region; it reads SRPGTNRLDSDQSTTNKSVTVSIDDKSMSDLDPR. Polar residues predominate over residues 636 to 646; sequence DQSTTNKSVTV. Basic and acidic residues predominate over residues 648-659; sequence IDDKSMSDLDPR.

The protein belongs to the protein kinase superfamily. Ser/Thr protein kinase family. CRK subfamily.

Its subcellular location is the membrane. It catalyses the reaction L-seryl-[protein] + ATP = O-phospho-L-seryl-[protein] + ADP + H(+). It carries out the reaction L-threonyl-[protein] + ATP = O-phospho-L-threonyl-[protein] + ADP + H(+). This Arabidopsis thaliana (Mouse-ear cress) protein is Cysteine-rich receptor-like protein kinase 7 (CRK7).